Here is a 121-residue protein sequence, read N- to C-terminus: Small ribosomal subunit protein uS13 (121 aa).

A disordered region spans residues 91-121 (HRRGLPVRGQNSKNNARTRKGPRRTVANKKK). Positions 106-121 (ARTRKGPRRTVANKKK) are enriched in basic residues.

The protein belongs to the universal ribosomal protein uS13 family. In terms of assembly, part of the 30S ribosomal subunit. Forms a loose heterodimer with protein S19. Forms two bridges to the 50S subunit in the 70S ribosome.

In terms of biological role, located at the top of the head of the 30S subunit, it contacts several helices of the 16S rRNA. In the 70S ribosome it contacts the 23S rRNA (bridge B1a) and protein L5 of the 50S subunit (bridge B1b), connecting the 2 subunits; these bridges are implicated in subunit movement. Contacts the tRNAs in the A and P-sites. This Bacillus cereus (strain AH187) protein is Small ribosomal subunit protein uS13.